Consider the following 590-residue polypeptide: Multidrug and toxin extrusion protein 1 (590 aa).

The Cytoplasmic portion of the chain corresponds to 1-59; the sequence is MDSITSYNVTQMNGDTKQEKCDDVLSTSSTQKFCGGCRKKLRSLLPVNYKTEIVELLKL. A helical membrane pass occupies residues 60-80; sequence AGPVFISQLMIFLISFVSTVF. Topologically, residues 81–88 are extracellular; that stretch reads CGHLGKTE. A helical membrane pass occupies residues 89–109; that stretch reads LAGVALAIAVINVTGISIGSG. The Cytoplasmic portion of the chain corresponds to 110–137; it reads LASACDTLISQTFGSNNLKRVGVILQRG. A helical transmembrane segment spans residues 138 to 158; sequence ILILLLACFPCWALLINTEPI. Residues 159–167 are Extracellular-facing; it reads LLAVRQSPN. Residues 168–188 traverse the membrane as a helical segment; sequence VASLSQLYVKIFMPALPAAFM. Topologically, residues 189 to 199 are cytoplasmic; the sequence is YQLQGRYLQNQ. A helical membrane pass occupies residues 200 to 222; sequence GIIWPQVITGAAGNILNALINYV. The Extracellular portion of the chain corresponds to 223 to 231; it reads FLHLLELGV. Residues 232–254 form a helical membrane-spanning segment; that stretch reads AGSAAANTISQYSLAVFLYVYIR. The Cytoplasmic portion of the chain corresponds to 255–274; the sequence is WKNLHKATWDGWSRDCLQEW. A helical transmembrane segment spans residues 275 to 294; sequence GAFIRLALPSMLMLCVEWWT. Residues 295–313 lie on the Extracellular side of the membrane; it reads YEIGGFLAGLISETELGAQ. The helical transmembrane segment at 314–334 threads the bilayer; it reads SVVYELATIAYMFPLGFAVAA. At 335 to 351 the chain is on the cytoplasmic side; it reads SVRVGNALGAGNTERAK. A helical membrane pass occupies residues 352 to 372; it reads LSAKVALVCGVLVSCVVATLI. The Extracellular segment spans residues 373-395; sequence GCTKDVIAYIFTTEEEIVSRVSQ. Residues 396–416 form a helical membrane-spanning segment; sequence VMIMYGFFHLFDAIAGITGGI. Over 417-430 the chain is Cytoplasmic; that stretch reads VRGAGKQLLGALCN. A helical membrane pass occupies residues 431 to 451; sequence IVGYYFVGFPTGVSLMFALSM. Residue glycine 452 is a topological domain, extracellular. The chain crosses the membrane as a helical span at residues 453–473; that stretch reads IIGLWIGFFGCVFLQSLFFII. The Cytoplasmic portion of the chain corresponds to 474–565; that stretch reads LIYKLDWKKA…TTKQLIVRRG (92 aa). A helical membrane pass occupies residues 566-586; that stretch reads LAVLLMVLILAGGIVLNEMLV. Over 587–590 the chain is Extracellular; the sequence is RYLR.

Belongs to the multi antimicrobial extrusion (MATE) (TC 2.A.66.1) family.

It localises to the cell membrane. Functionally, solute transporter for tetraethylammonium (TEA), cimetidine, metformin, guanidine, N-methylnicotinamide (NMN) and also the zwitterionic cephalosporin cephalexin. Responsible for the secretion of cationic drugs across the brush border membranes. In Danio rerio (Zebrafish), this protein is Multidrug and toxin extrusion protein 1 (slc47a1).